A 158-amino-acid polypeptide reads, in one-letter code: C-type lectin BfL-1 (158 aa).

Residues 1–21 form the signal peptide; the sequence is MGHFTFIGLCLLAMFLSLSGA. 4 disulfides stabilise this stretch: Cys-26–Cys-37, Cys-54–Cys-154, Cys-61–Cys-156, and Cys-129–Cys-146. The C-type lectin domain occupies 33–155; it reads KNGLCYKVFS…CAALRPFLCQ (123 aa). Ca(2+)-binding residues include Gln-119, Asp-121, and Glu-127. The short motif at 119–121 is the Galactose-binding element; the sequence is QPD. Residue Asn-134 is glycosylated (N-linked (GlcNAc...) asparagine). Residues Asn-142 and Asp-143 each coordinate Ca(2+).

This sequence belongs to the true venom lectin family. In terms of assembly, homodimer; non-covalently linked. In terms of tissue distribution, expressed by the venom gland.

Its subcellular location is the secreted. Functionally, galactose-binding lectin which recognizes specific carbohydrate structures and agglutinates a variety of animal cells by binding to cell-surface glycoproteins and glycolipids. May be a calcium-dependent lectin. The protein is C-type lectin BfL-1 of Bungarus fasciatus (Banded krait).